Consider the following 429-residue polypeptide: Glutamyl-tRNA reductase (429 aa).

Residues 52–55 (TCNR), S110, 115–117 (EAQ), and Q121 each bind substrate. The Nucleophile role is filled by C53. Position 190-195 (190-195 (GAGAMI)) interacts with NADP(+).

This sequence belongs to the glutamyl-tRNA reductase family. Homodimer.

The enzyme catalyses (S)-4-amino-5-oxopentanoate + tRNA(Glu) + NADP(+) = L-glutamyl-tRNA(Glu) + NADPH + H(+). Its pathway is porphyrin-containing compound metabolism; protoporphyrin-IX biosynthesis; 5-aminolevulinate from L-glutamyl-tRNA(Glu): step 1/2. In terms of biological role, catalyzes the NADPH-dependent reduction of glutamyl-tRNA(Glu) to glutamate 1-semialdehyde (GSA). In Verminephrobacter eiseniae (strain EF01-2), this protein is Glutamyl-tRNA reductase.